Consider the following 522-residue polypeptide: 2-isopropylmalate synthase (522 aa).

One can recognise a Pyruvate carboxyltransferase domain in the interval 5–267 (VIIFDTTLRD…ETGINAKEIH (263 aa)). Mn(2+) contacts are provided by aspartate 14, histidine 202, histidine 204, and asparagine 238. Residues 392–522 (QLQQLVVQSD…MHKNRELGGV (131 aa)) are regulatory domain.

This sequence belongs to the alpha-IPM synthase/homocitrate synthase family. LeuA type 1 subfamily. As to quaternary structure, homodimer. Mn(2+) serves as cofactor.

The protein localises to the cytoplasm. The enzyme catalyses 3-methyl-2-oxobutanoate + acetyl-CoA + H2O = (2S)-2-isopropylmalate + CoA + H(+). Its pathway is amino-acid biosynthesis; L-leucine biosynthesis; L-leucine from 3-methyl-2-oxobutanoate: step 1/4. Catalyzes the condensation of the acetyl group of acetyl-CoA with 3-methyl-2-oxobutanoate (2-ketoisovalerate) to form 3-carboxy-3-hydroxy-4-methylpentanoate (2-isopropylmalate). This Shewanella sp. (strain ANA-3) protein is 2-isopropylmalate synthase.